Here is a 644-residue protein sequence, read N- to C-terminus: Phosphatidylinositol polyphosphate 5-phosphatase type IV (644 aa).

Residues 1–193 are disordered; sequence MPSKAENLRP…RLPSLLPPRP (193 aa). 8 repeat units span residues 10 to 13, 15 to 18, 28 to 31, 39 to 42, 55 to 58, 69 to 71, 72 to 74, and 75 to 78. The segment at 10–242 is 13 X 4 AA repeats of P-X-X-P; it reads PSEPAPQPPE…SLGPGRPRSP (233 aa). The span at 78-90 shows a compositional bias: basic and acidic residues; that stretch reads PRLERALSLDDKG. Ser-99 is subject to Phosphoserine. Residues 107–118 are compositionally biased toward polar residues; it reads NGTSPSRGSVQS. Repeat 9 spans residues 121-124; the sequence is PGAP. Low complexity predominate over residues 152-163; sequence GSPSSGGNPLSG. 4 tandem repeats follow at residues 169–172, 183–185, 190–193, and 236–239. Ser-241 and Ser-256 each carry phosphoserine. Cys-641 carries the post-translational modification Cysteine methyl ester. The S-farnesyl cysteine moiety is linked to residue Cys-641. Positions 642 to 644 are cleaved as a propeptide — removed in mature form; the sequence is SVS.

It belongs to the inositol 1,4,5-trisphosphate 5-phosphatase type IV family. As to quaternary structure, interacts (when prenylated) with PDE6D; this is important for normal location in cilia. Detected in brain, heart, pancreas, testis and spleen.

It is found in the cytoplasm. The protein localises to the cytoskeleton. The protein resides in the cilium axoneme. It localises to the golgi apparatus. Its subcellular location is the golgi stack membrane. It is found in the cell membrane. The protein localises to the cell projection. The protein resides in the ruffle. It localises to the nucleus. It carries out the reaction a 1,2-diacyl-sn-glycero-3-phospho-(1D-myo-inositol-4,5-bisphosphate) + H2O = a 1,2-diacyl-sn-glycero-3-phospho-(1D-myo-inositol 4-phosphate) + phosphate. The catalysed reaction is a 1,2-diacyl-sn-glycero-3-phospho-(1D-myo-inositol-3,4,5-trisphosphate) + H2O = a 1,2-diacyl-sn-glycero-3-phospho-(1D-myo-inositol-3,4-bisphosphate) + phosphate. The enzyme catalyses a 1,2-diacyl-sn-glycero-3-phospho-(1D-myo-inositol-3,5-bisphosphate) + H2O = a 1,2-diacyl-sn-glycero-3-phospho-(1D-myo-inositol-3-phosphate) + phosphate. Its activity is regulated as follows. Active in the presence of octyl-glucoside or Triton X-100, but completely inhibited by CTAB. Phosphatidylinositol (PtdIns) phosphatase that specifically hydrolyzes the 5-phosphate of phosphatidylinositol-3,4,5-trisphosphate (PtdIns(3,4,5)P3), phosphatidylinositol 4,5-bisphosphate (PtdIns(4,5)P2) and phosphatidylinositol 3,5-bisphosphate (PtdIns(3,5)P2). Specific for lipid substrates, inactive towards water soluble inositol phosphates. Plays an essential role in the primary cilium by controlling ciliary growth and phosphoinositide 3-kinase (PI3K) signaling and stability. This chain is Phosphatidylinositol polyphosphate 5-phosphatase type IV (INPP5E), found in Homo sapiens (Human).